We begin with the raw amino-acid sequence, 910 residues long: Protein translocase subunit SecA (910 aa).

Residues Gln-89, 107–111 (GEGKT), and Asp-502 contribute to the ATP site. Positions 894, 896, 905, and 906 each coordinate Zn(2+).

It belongs to the SecA family. In terms of assembly, monomer and homodimer. Part of the essential Sec protein translocation apparatus which comprises SecA, SecYEG and auxiliary proteins SecDF-YajC and YidC. Zn(2+) is required as a cofactor.

It is found in the cell inner membrane. The protein resides in the cytoplasm. The catalysed reaction is ATP + H2O + cellular proteinSide 1 = ADP + phosphate + cellular proteinSide 2.. Its function is as follows. Part of the Sec protein translocase complex. Interacts with the SecYEG preprotein conducting channel. Has a central role in coupling the hydrolysis of ATP to the transfer of proteins into and across the cell membrane, serving both as a receptor for the preprotein-SecB complex and as an ATP-driven molecular motor driving the stepwise translocation of polypeptide chains across the membrane. This chain is Protein translocase subunit SecA, found in Chelativorans sp. (strain BNC1).